Reading from the N-terminus, the 160-residue chain is Ureidoglycolate lyase (160 aa).

Belongs to the ureidoglycolate lyase family. Homodimer. The cofactor is Ni(2+).

It catalyses the reaction (S)-ureidoglycolate = urea + glyoxylate. It functions in the pathway nitrogen metabolism; (S)-allantoin degradation. Functionally, catalyzes the catabolism of the allantoin degradation intermediate (S)-ureidoglycolate, generating urea and glyoxylate. Involved in the utilization of allantoin as nitrogen source. The protein is Ureidoglycolate lyase of Salmonella agona (strain SL483).